The primary structure comprises 283 residues: Methylamine utilization ferredoxin-type protein MauN (283 aa).

2 consecutive 4Fe-4S ferredoxin-type domains span residues 217–248 and 251–280; these read VRVSARNRDACDNCGACFSTCPEPHVIVPALK and GSPLILSGDCINCGGCIDSCPNRVFAMASR. Cys227, Cys230, Cys233, Cys237, Cys260, Cys263, Cys266, and Cys270 together coordinate [4Fe-4S] cluster.

Its pathway is one-carbon metabolism; methylamine degradation. Involved in electron transfer. In Paracoccus denitrificans (strain Pd 1222), this protein is Methylamine utilization ferredoxin-type protein MauN (mauN).